The primary structure comprises 445 residues: ATP-dependent protease ATPase subunit HslU (445 aa).

ATP-binding positions include I17, 59–64 (GVGKTE), D254, E319, and R391.

This sequence belongs to the ClpX chaperone family. HslU subfamily. A double ring-shaped homohexamer of HslV is capped on each side by a ring-shaped HslU homohexamer. The assembly of the HslU/HslV complex is dependent on binding of ATP.

It localises to the cytoplasm. ATPase subunit of a proteasome-like degradation complex; this subunit has chaperone activity. The binding of ATP and its subsequent hydrolysis by HslU are essential for unfolding of protein substrates subsequently hydrolyzed by HslV. HslU recognizes the N-terminal part of its protein substrates and unfolds these before they are guided to HslV for hydrolysis. The polypeptide is ATP-dependent protease ATPase subunit HslU (Pseudomonas fluorescens (strain SBW25)).